The primary structure comprises 98 residues: Sm-like protein LSM3B (98 aa).

Ser-2 carries the N-acetylserine modification. In terms of domain architecture, Sm spans 11 to 96 (EPLDLIRLSL…VILVSPPLRT (86 aa)).

The protein belongs to the snRNP Sm proteins family. In terms of assembly, component of the heptameric LSM1-LSM7 complex that forms a seven-membered ring structure with a donut shape. The LSM subunits are arranged in the order LSM1, LSM2, LSM3, LSM6, LSM5, LSM7 and LSM4. Component of the heptameric LSM2-LSM8 complex that forms a seven-membered ring structure with a donut shape. The LSM subunits are arranged in the order LSM8, LSM2, LSM3, LSM6, LSM5, LSM7 and LSM4. LSM3B subunit interacts only with its two neighboring subunits, LSM2 and LSM6A or LSM6B. As to expression, expressed in roots, leaves, stems, flowers and siliques.

It localises to the cytoplasm. The protein resides in the nucleus. In terms of biological role, component of LSM protein complexes, which are involved in RNA processing. Component of the cytoplasmic LSM1-LSM7 complex which is involved in mRNA degradation by promoting decapping and leading to accurate 5'-3' mRNA decay. The cytoplasmic LSM1-LSM7 complex regulates developmental gene expression by the decapping of specific development-related transcripts. Component of the nuclear LSM2-LSM8 complex which is involved splicing nuclear mRNAs. LSM2-LSM8 binds directly to the U6 small nuclear RNAs (snRNAs) and is essential for accurate splicing of selected development-related mRNAs through the stabilization of the spliceosomal U6 snRNA. Plays a critical role in the regulation of development-related gene expression. The protein is Sm-like protein LSM3B of Arabidopsis thaliana (Mouse-ear cress).